Here is a 301-residue protein sequence, read N- to C-terminus: Ornithine carbamoyltransferase (301 aa).

Carbamoyl phosphate-binding positions include 47 to 50, glutamine 74, arginine 98, and 125 to 128; these read STRT and HPMQ. Residues asparagine 156, aspartate 220, and 224 to 225 each bind L-ornithine; that span reads SM. Carbamoyl phosphate contacts are provided by residues 260 to 261 and arginine 288; that span reads CL.

The protein belongs to the aspartate/ornithine carbamoyltransferase superfamily. OTCase family.

It localises to the cytoplasm. It carries out the reaction carbamoyl phosphate + L-ornithine = L-citrulline + phosphate + H(+). The protein operates within amino-acid biosynthesis; L-arginine biosynthesis; L-arginine from L-ornithine and carbamoyl phosphate: step 1/3. Its function is as follows. Reversibly catalyzes the transfer of the carbamoyl group from carbamoyl phosphate (CP) to the N(epsilon) atom of ornithine (ORN) to produce L-citrulline. This is Ornithine carbamoyltransferase from Picrophilus torridus (strain ATCC 700027 / DSM 9790 / JCM 10055 / NBRC 100828 / KAW 2/3).